A 415-amino-acid polypeptide reads, in one-letter code: Serine hydroxymethyltransferase (415 aa).

(6S)-5,6,7,8-tetrahydrofolate-binding positions include L122 and 126-128 (GHL). K230 carries the post-translational modification N6-(pyridoxal phosphate)lysine.

Belongs to the SHMT family. Homodimer. The cofactor is pyridoxal 5'-phosphate.

The protein resides in the cytoplasm. The catalysed reaction is (6R)-5,10-methylene-5,6,7,8-tetrahydrofolate + glycine + H2O = (6S)-5,6,7,8-tetrahydrofolate + L-serine. Its pathway is one-carbon metabolism; tetrahydrofolate interconversion. It participates in amino-acid biosynthesis; glycine biosynthesis; glycine from L-serine: step 1/1. Functionally, catalyzes the reversible interconversion of serine and glycine with tetrahydrofolate (THF) serving as the one-carbon carrier. This reaction serves as the major source of one-carbon groups required for the biosynthesis of purines, thymidylate, methionine, and other important biomolecules. Also exhibits THF-independent aldolase activity toward beta-hydroxyamino acids, producing glycine and aldehydes, via a retro-aldol mechanism. The polypeptide is Serine hydroxymethyltransferase (Leptothrix cholodnii (strain ATCC 51168 / LMG 8142 / SP-6) (Leptothrix discophora (strain SP-6))).